A 510-amino-acid chain; its full sequence is Protein disulfide-isomerase (510 aa).

Positions 1–19 (MLRRALLCLAVAAAPGLYA) are cleaved as a signal peptide. The 117-residue stretch at 20–136 (DAPEEEDHVL…IVNWLKKRTG (117 aa)) folds into the Thioredoxin 1 domain. Catalysis depends on nucleophile residues Cys55 and Cys58. A disulfide bond links Cys55 and Cys58. Lys202 is subject to N6-acetyllysine. N6-succinyllysine is present on residues Lys224 and Lys273. A phosphoserine mark is found at Ser333 and Ser359. One can recognise a Thioredoxin 2 domain in the interval 351 to 477 (GKIKPHLMSQ…FKKFLESGGQ (127 aa)). Active-site nucleophile residues include Cys399 and Cys402. Residues Cys399 and Cys402 are joined by a disulfide bond. At Ser429 the chain carries Phosphoserine. Residues 473–510 (ESGGQDGAGDDDDLEDLEEAEEPDMEEDDDQKAVKDEL) form a disordered region. Over residues 480–502 (AGDDDDLEDLEEAEEPDMEEDDD) the composition is skewed to acidic residues. Residues 507 to 510 (KDEL) carry the Prevents secretion from ER motif.

This sequence belongs to the protein disulfide isomerase family. Heterodimer; heterodimerizes with the protein microsomal triglyceride transfer MTTP. Homodimer. Homodimer. Monomers and homotetramers may also occur. Interacts with P4HA2, forming a heterotetramer consisting of 2 alpha subunits (P4HA2) and 2 beta (P4HB), where P4HB plays the role of a structural subunit; this tetramer catalyzes the formation of 4-hydroxyproline in collagen. Also constitutes the structural subunit of the microsomal triacylglycerol transfer protein MTTP in mammalian cells. Stabilizes both enzymes and retain them in the ER without contributing to the catalytic activity. Binds UBQLN1. Interacts with ERO1B. Interacts with ILDR2. Interacts with ERN1/IRE1A (via N-terminus); the interaction is enhanced by phosphorylation of P4HB by FAM20C in response to endoplasmic reticulum stress and results in attenuation of ERN1 activity. Post-translationally, phosphorylation of Ser-359 by FAM20C is induced by endoplasmic reticulum stress and results in a functional switch from oxidoreductase to molecular chaperone. It also promotes interaction with ERN1.

Its subcellular location is the endoplasmic reticulum. The protein localises to the endoplasmic reticulum lumen. It localises to the melanosome. It is found in the cell membrane. It carries out the reaction Catalyzes the rearrangement of -S-S- bonds in proteins.. Functionally, this multifunctional protein catalyzes the formation, breakage and rearrangement of disulfide bonds. At the cell surface, seems to act as a reductase that cleaves disulfide bonds of proteins attached to the cell. May therefore cause structural modifications of exofacial proteins. Inside the cell, seems to form/rearrange disulfide bonds of nascent proteins. At high concentrations and following phosphorylation by FAM20C, functions as a chaperone that inhibits aggregation of misfolded proteins. At low concentrations, facilitates aggregation (anti-chaperone activity). May be involved with other chaperones in the structural modification of the TG precursor in hormone biogenesis. Also acts as a structural subunit of various enzymes such as prolyl 4-hydroxylase and microsomal triacylglycerol transfer protein MTTP. Receptor for LGALS9; the interaction retains P4HB at the cell surface of Th2 T helper cells, increasing disulfide reductase activity at the plasma membrane, altering the plasma membrane redox state and enhancing cell migration. This is Protein disulfide-isomerase (P4HB) from Macaca fuscata fuscata (Japanese macaque).